A 407-amino-acid polypeptide reads, in one-letter code: uncharacterized protein (407 aa).

A run of 11 helical transmembrane segments spans residues 13-30 (IVFT…SPFL), 40-62 (VTPL…YYVL), 67-89 (ILGM…YNII), 118-140 (LAFA…VFSG), 147-169 (VYER…IRRL), 179-199 (AVGL…YYNY), 253-271 (WISG…SVFV), 281-303 (TEII…FGPL), 334-356 (GYLI…EIIA), 361-378 (AFAF…LVSF), and 385-402 (QFLV…IVLF).

It is found in the cell membrane. This is an uncharacterized protein from Aquifex aeolicus (strain VF5).